The primary structure comprises 225 residues: UPF0173 metal-dependent hydrolase Pcal_1074 (225 aa).

The protein belongs to the UPF0173 family.

This Pyrobaculum calidifontis (strain DSM 21063 / JCM 11548 / VA1) protein is UPF0173 metal-dependent hydrolase Pcal_1074.